A 272-amino-acid chain; its full sequence is MKRSAFFISDGTGITAETLGQSLLAQFENITFSKFTRPYIDSVEKARAMVQQINKAAETDGFRPIIFDTIVNQDIREILATSNGFMIDIFSTFLAPLEQELTEHSSYTVGKSHSIGHNSNYMERIEAVNFALDNDDGARTHYYDKADLILVGVSRCGKTPTCLYMAMQFGIRAANYPLTEDDMERLQLPAALRAHQHKLFGLTIDPDRLTAIRNERKPNSRYSSYAQCEFEVREVENLFRRENIPHINSTHFSVEEISAKILVEKGVERRFK.

152–159 lines the ADP pocket; it reads GVSRCGKT.

This sequence belongs to the pyruvate, phosphate/water dikinase regulatory protein family. PSRP subfamily.

The enzyme catalyses [pyruvate, water dikinase] + ADP = [pyruvate, water dikinase]-phosphate + AMP + H(+). It carries out the reaction [pyruvate, water dikinase]-phosphate + phosphate + H(+) = [pyruvate, water dikinase] + diphosphate. In terms of biological role, bifunctional serine/threonine kinase and phosphorylase involved in the regulation of the phosphoenolpyruvate synthase (PEPS) by catalyzing its phosphorylation/dephosphorylation. The polypeptide is Putative phosphoenolpyruvate synthase regulatory protein (Pseudomonas fluorescens (strain Pf0-1)).